Here is a 64-residue protein sequence, read N- to C-terminus: Large ribosomal subunit protein bL35 (64 aa).

The span at 1-14 (MKQKTHKGTAKRVK) shows a compositional bias: basic residues. The disordered stretch occupies residues 1 to 50 (MKQKTHKGTAKRVKITGSGKLRREQANRRHLLEGKPSKRTRRLKGTEDVA). Residues 21–36 (LRREQANRRHLLEGKP) are compositionally biased toward basic and acidic residues.

Belongs to the bacterial ribosomal protein bL35 family.

The protein is Large ribosomal subunit protein bL35 of Corynebacterium diphtheriae (strain ATCC 700971 / NCTC 13129 / Biotype gravis).